A 377-amino-acid chain; its full sequence is Presenilin-associated rhomboid-like protein, mitochondrial (377 aa).

The transit peptide at Met1–Gly50 directs the protein to the mitochondrion. The Mitochondrial matrix segment spans residues Phe51 to Pro99. Ser63 and Ser68 each carry phosphoserine. Residues Phe100–Tyr119 traverse the membrane as a helical segment. The Mitochondrial intermembrane segment spans residues Glu120–Arg165. The chain crosses the membrane as a helical span at residues Thr166–Ser185. The Mitochondrial matrix portion of the chain corresponds to Leu186–Ser205. Residues Pro206 to Trp228 traverse the membrane as a helical segment. The Mitochondrial intermembrane segment spans residues Ser229–Gln242. A helical membrane pass occupies residues Phe243 to Val260. Topologically, residues Cys261–Pro270 are mitochondrial matrix. A helical transmembrane segment spans residues Ser271 to Thr287. Ser275 functions as the Nucleophile in the catalytic mechanism. The Mitochondrial intermembrane segment spans residues Lys288–Arg293. The chain crosses the membrane as a helical span at residues Leu294 to Met316. Topologically, residues Asp317–His330 are mitochondrial matrix. The helical transmembrane segment at Ala331–Trp352 threads the bilayer. His333 is a catalytic residue. At Lys353–Lys377 the chain is on the mitochondrial intermembrane side.

The protein belongs to the peptidase S54 family. As to quaternary structure, interacts with PSEN1 and PSEN2. Binds OPA1. In terms of processing, P-beta is proteolytically processed (beta-cleavage) in a PARL-dependent manner.

The protein localises to the mitochondrion inner membrane. Its subcellular location is the nucleus. It carries out the reaction Cleaves type-1 transmembrane domains using a catalytic dyad composed of serine and histidine that are contributed by different transmembrane domains.. In terms of biological role, required for the control of apoptosis during postnatal growth. Essential for proteolytic processing of an antiapoptotic form of OPA1 which prevents the release of mitochondrial cytochrome c in response to intrinsic apoptotic signals. Required for the maturation of PINK1 into its 52kDa mature form after its cleavage by mitochondrial-processing peptidase (MPP). Promotes cleavage of serine/threonine-protein phosphatase PGAM5 in damaged mitochondria in response to loss of mitochondrial membrane potential. Mediates differential cleavage of PINK1 and PGAM5 depending on the health status of mitochondria, disassociating from PINK1 and associating with PGAM5 in response to mitochondrial membrane potential loss. Required for processing of CLPB into a form with higher protein disaggregase activity by removing an autoinhibitory N-terminal peptide. Promotes processing of DIABLO/SMAC in the mitochondrion which is required for DIABLO apoptotic activity. Also required for cleavage of STARD7 and TTC19. Promotes changes in mitochondria morphology regulated by phosphorylation of P-beta domain. In Mus musculus (Mouse), this protein is Presenilin-associated rhomboid-like protein, mitochondrial (Parl).